Consider the following 610-residue polypeptide: Nuclear factor 7, ovary (610 aa).

The Tudor-knot domain occupies asparagine 21 to valine 75. The disordered stretch occupies residues proline 79–alanine 127. Threonine 104 is subject to Phosphothreonine; by CDK1. A compositionally biased stretch (basic and acidic residues) spans arginine 108–alanine 127. An RING-type zinc finger spans residues cysteine 146–lysine 186. The segment at arginine 220–isoleucine 261 adopts a B box-type zinc-finger fold. Cysteine 225, histidine 228, cysteine 247, and histidine 253 together coordinate Zn(2+). Positions aspartate 295 to serine 374 form a coiled coil. The region spanning proline 415 to glutamine 610 is the B30.2/SPRY domain.

Monomer. In terms of tissue distribution, abundant in oocytes. At the neurula stage, low expression in dorsal embryo region including neural folds and somites.

It is found in the nucleus. In terms of biological role, transcription factor that determines dorsal-ventral body axis. The sequence is that of Nuclear factor 7, ovary from Xenopus laevis (African clawed frog).